Reading from the N-terminus, the 730-residue chain is Sodium-dependent neutral amino acid transporter B(0)AT2 (730 aa).

The disordered stretch occupies residues 1 to 24 (MPKNSKVVKRELDDDVTESVKDLL). Topologically, residues 1–70 (MPKNSKVVKR…RPAWSSKLQY (70 aa)) are extracellular. Phosphoserine occurs at positions 25 and 55. 3 consecutive transmembrane segments (helical) span residues 71–91 (ILAQVGFSVGLGNVWRFPYLC), 97–117 (GAYLLPYLILLMVIGIPLFFL), and 149–169 (VVCYFVALYYNVIIGWSLFYF). Residues 170–223 (SQSFQQPLPWDQCPLVKNASHTFVEPECEQSSATTYYWYREALNISSSISESGG) lie on the Cytoplasmic side of the membrane. Transmembrane regions (helical) follow at residues 224–244 (LNWKMTICLLAAWVMVCLAMI) and 253–273 (IIYFSSLFPYVVLICFLIRAL). Asparagine 276 carries N-linked (GlcNAc...) asparagine glycosylation. The next 2 membrane-spanning stretches (helical) occupy residues 302–322 (AATQVFFALGLGFGGVIAFSS) and 335–355 (VLVSFINFFTSVLATLVVFAV). The Cytoplasmic segment spans residues 356–458 (LGFKANVINE…AMTHFPASPF (103 aa)). 5 helical membrane passes run 459 to 479 (WSVMFFLMLVNLGLGSMFGTI), 494 to 514 (KEILTVICCLLAFCIGLIFVQ), 530 to 550 (TLPLLIVVILENIAVCFVYGI), 575 to 595 (YVSPLMLLSLLIASVVNMGLS), and 619 to 639 (LVVCVSLVVFAVLPVPVVFIV). Residues 640–730 (RRFNLIDDSS…IMPDMPESDL (91 aa)) are Extracellular-facing. A phosphoserine mark is found at serine 687, serine 699, and serine 701.

The protein belongs to the sodium:neurotransmitter symporter (SNF) (TC 2.A.22) family. SLC6A15 subfamily.

The protein localises to the membrane. It carries out the reaction L-leucine(in) + Na(+)(in) = L-leucine(out) + Na(+)(out). The enzyme catalyses L-isoleucine(in) + Na(+)(in) = L-isoleucine(out) + Na(+)(out). The catalysed reaction is L-methionine(in) + Na(+)(in) = L-methionine(out) + Na(+)(out). It catalyses the reaction L-proline(in) + Na(+)(in) = L-proline(out) + Na(+)(out). It carries out the reaction L-alanine(in) + Na(+)(in) = L-alanine(out) + Na(+)(out). The enzyme catalyses L-asparagine(in) + Na(+)(in) = L-asparagine(out) + Na(+)(out). The catalysed reaction is L-valine(in) + Na(+)(in) = L-valine(out) + Na(+)(out). It catalyses the reaction L-cysteine(in) + Na(+)(in) = L-cysteine(out) + Na(+)(out). It carries out the reaction L-glutamine(in) + Na(+)(in) = L-glutamine(out) + Na(+)(out). The enzyme catalyses L-serine(in) + Na(+)(in) = L-serine(out) + Na(+)(out). The catalysed reaction is L-threonine(in) + Na(+)(in) = L-threonine(out) + Na(+)(out). It catalyses the reaction L-pipecolate(in) + Na(+)(in) = L-pipecolate(out) + Na(+)(out). It carries out the reaction L-phenylalanine(in) + Na(+)(in) = L-phenylalanine(out) + Na(+)(out). Functions as a sodium-dependent neutral amino acid transporter. Exhibits preference for the branched-chain amino acids, particularly leucine, valine and isoleucine and methionine. Can also transport low-affinity substrates such as alanine, phenylalanine, glutamine and pipecolic acid. Mediates the saturable, pH-sensitive and electrogenic cotransport of proline and sodium ions with a stoichiometry of 1:1. May have a role as transporter for neurotransmitter precursors into neurons. In contrast to other members of the neurotransmitter transporter family, does not appear to be chloride-dependent. The polypeptide is Sodium-dependent neutral amino acid transporter B(0)AT2 (SLC6A15) (Pongo abelii (Sumatran orangutan)).